A 964-amino-acid polypeptide reads, in one-letter code: Cycloisomaltooligosaccharide glucanotransferase (964 aa).

Residues 1–30 (MRVKILPLVFMTLLLIVPSQMLLPSGQANA) form the signal peptide. 2 CBM6 domains span residues 413–538 (DRYE…LTLG) and 740–863 (NMYE…LKLD).

It belongs to the glycosyl hydrolase 66 family.

The enzyme catalyses cyclizes part of a (1-&gt;6)-alpha-D-glucan chain by formation of a (1-&gt;6)-alpha-D-glucosidic bond.. Produces cycloisomaltooligosaccharide from dextran. This chain is Cycloisomaltooligosaccharide glucanotransferase (cit), found in Niallia circulans (Bacillus circulans).